The following is a 655-amino-acid chain: A-type voltage-gated potassium channel KCND3 (655 aa).

Topologically, residues 1-182 are cytoplasmic; sequence MAAGVAAWLP…FENPHTSTLA (182 aa). Interaction with KCNIP1 stretches follow at residues 6–21 and 70–78; these read AAWL…GWMP and EKEFFFNED. Residues His-104, Cys-110, Cys-131, and Cys-132 each coordinate Zn(2+). At Ser-153 the chain carries Phosphoserine. A helical membrane pass occupies residues 183–204; the sequence is LVFYYVTGFFIAVSVITNVVET. Topologically, residues 205-223 are extracellular; it reads VPCGTVPGSKELPCGERYS. The helical transmembrane segment at 224 to 246 threads the bilayer; that stretch reads VAFFCLDTACVMIFTVEYLLRLF. Residues 247–253 lie on the Cytoplasmic side of the membrane; sequence AAPSRYR. Residues 254-277 traverse the membrane as a helical segment; the sequence is FIRSVMSIIDVVAIMPYYIGLVMT. Topologically, residues 278 to 283 are extracellular; the sequence is NNEDVS. The chain crosses the membrane as a helical; Voltage-sensor span at residues 284–306; it reads GAFVTLRVFRVFRIFKFSRHSQG. Residues 307–318 lie on the Cytoplasmic side of the membrane; it reads LRILGYTLKSCA. The helical transmembrane segment at 319–343 threads the bilayer; that stretch reads SELGFLLFSLTMAIIIFATVMFYAE. Topologically, residues 344 to 352 are extracellular; sequence KGSSASKFT. Positions 353-366 form an intramembrane region, helical; it reads SIPASFWYTIVTMT. Residues Thr-367, Leu-368, Gly-369, and Tyr-370 each contribute to the K(+) site. The Selectivity filter signature appears at 367–372; it reads TLGYGD. An intramembrane segment occupies 367-374; the sequence is TLGYGDMV. A helical transmembrane segment spans residues 378–400; that stretch reads IAGKIFGSICSLSGVLVIALPVP. The Cytoplasmic portion of the chain corresponds to 401–655; the sequence is VIVSNFSRIY…TSNVVKVSVL (255 aa). Thr-459 is modified (phosphothreonine). The tract at residues 470-487 is interaction with KCNIP1 and KCNIP2; it reads SLIESQHHHLLHCLEKTT. Residues 474–489 are mediates dendritic targeting; it reads SQHHHLLHCLEKTTGL. The interval 523 to 565 is disordered; sequence SSMQNYPSTRSPSLSSHSGLTTTCCSRRSKKTTHLPNSNLPAT. The segment covering 529–548 has biased composition (low complexity); sequence PSTRSPSLSSHSGLTTTCCS. Residue Ser-569 is modified to Phosphoserine; by CaMK2D. Residue Ser-585 is modified to Phosphoserine. Residues 616 to 647 form a disordered region; that stretch reads SIPTPPALTPEGESRPPPASPGPNTNIPSITS. Positions 637–647 are enriched in polar residues; it reads GPNTNIPSITS.

It belongs to the potassium channel family. D (Shal) (TC 1.A.1.2) subfamily. Kv4.3/KCND3 sub-subfamily. In terms of assembly, homotetramer. Heterotetramer with KCND2. Associates with the regulatory subunits KCNIP3 and KCNIP4. Interacts with KCNE1, KCNE2, SCN1B and KCNAB1 and DLG1. Component of heteromultimeric potassium channels. Identified in potassium channel complexes containing KCND1, KCND2, KCND3, KCNIP1, KCNIP2, KCNIP3, KCNIP4, DPP6 and DPP10. Interacts with KCNIP1; each KCNIP1 monomer interacts with two adjacent KCND3 subunits, through both the N-terminal inactivation ball of a KCND3 subunit and a C-terminal helix from the adjacent KCND3 subunit, clamping them together; this interaction stabilizes the tetrameric form and modulates the channel gating kinetics namely channel activation and inactivation kinetics and rate of recovery from inactivation. Interacts with DPP6; this interaction modulates the channel gating kinetics namely channel activation and inactivation kinetics and rate of recovery from inactivation. Interacts with KCNIP2; each KCNIP2 monomer interacts with two adjacent KCND3 subunits, through both the N-terminal inactivation ball of a KCND3 subunit and a C-terminal helix from the adjacent KCND3 subunit, clamping them together; this interaction modulates the channel gating kinetics. In terms of processing, regulated through phosphorylation at Ser-569 by CaMK2D. As to expression, highly expressed in brain, in particular in the retrosplenial cortex, medial habenula, anterior thalamus, hippocampus, cerebellum and lateral geniculate and superior colliculus. Highly expressed in heart atrium (at protein level) and throughout the ventricle wall, in lung and vas deferens.

Its subcellular location is the cell membrane. It localises to the sarcolemma. The protein localises to the cell projection. It is found in the dendrite. The enzyme catalyses K(+)(in) = K(+)(out). Its function is as follows. Pore-forming (alpha) subunit of voltage-gated A-type potassium channels that mediates transmembrane potassium transport in excitable membranes, in brain and heart. In cardiomyocytes, may generate the transient outward potassium current I(To). In neurons, may conduct the transient subthreshold somatodendritic A-type potassium current (ISA). Kinetics properties are characterized by fast activation at subthreshold membrane potentials, rapid inactivation, and quick recovery from inactivation. Channel properties are modulated by interactions with regulatory subunits. Interaction with the regulatory subunits KCNIP1 or KCNIP2 modulates the channel gating kinetics namely channel activation and inactivation kinetics and rate of recovery from inactivation. Likewise, interaction with DPP6 modulates the channel gating kinetics namely channel activation and inactivation kinetics. This is A-type voltage-gated potassium channel KCND3 from Rattus norvegicus (Rat).